The chain runs to 193 residues: Cryptic protein (193 aa).

The N-terminal stretch at M1–G25 is a signal peptide. 2 N-linked (GlcNAc...) asparagine glycosylation sites follow: N38 and N60. Disulfide bonds link C91–C103 and C105–C114. The EGF-like domain maps to C91–E115.

This sequence belongs to the EGF-CFC (Cripto-1/FRL1/Cryptic) family.

It is found in the cell membrane. The protein resides in the secreted. Its function is as follows. May play a role in mesoderm and/or neural patterning during gastrulation. In Gallus gallus (Chicken), this protein is Cryptic protein (CFC1).